We begin with the raw amino-acid sequence, 689 residues long: Shutoff protein (689 aa).

Positions 1–24 are disordered; sequence MSEEPVSGTTVEIEEDTHTPPNSP. The segment at 226–289 is binding to host EIF4G; sequence VMNNLLVKRA…SVLVTVVLEC (64 aa). An RRM domain is found at 292–410; that stretch reads RLFTSKDMVK…PLYTETSQRL (119 aa). A phosphotyrosine; by host mark is found at Tyr309 and Tyr627. A disordered region spans residues 625 to 689; that stretch reads GQYLDPHTGE…GEPDVRGTTS (65 aa). Positions 645–655 are enriched in basic and acidic residues; the sequence is SGHEFQGDGRH. A compositionally biased stretch (basic residues) spans 656 to 675; the sequence is REPKRGRHFRQRGGPRKPPR. The span at 678–689 shows a compositional bias: basic and acidic residues; the sequence is AGGEPDVRGTTS.

This sequence belongs to the adenoviridae shutoff protein family. As to quaternary structure, monomer. Interacts with hexon protein; this interaction allows chaperoning and trimerization of hexon proteins. Interacts (via N-terminus) with host initiation factor EIF4G (via C-terminus). Interacts (via RRM domain) with viral mRNAs that contain the tripartite leader; this interaction allows ribosome shunting and expression of viral late mRNAs. Might be cleaved by the viral protease. Post-translationally, phosphorylated. Tyrosine phosphorylation enhances preferential binding to tripartite leader mRNAs and allows ribosome shunting. In terms of processing, methylated. Asymmetric dimethylation by host PRMT1 of the Arg/Gly-rich region may regulate shutoff protein binding to hexon and promote the capsid assembly in the nucleus.

The protein resides in the host cytoplasm. Functionally, protein that inhibits host translation while promoting late viral translation by ribosome shunting. Blocks host cap-dependent translation by binding to eIF4G, displacing MKNK1 from cap initiation complexes and preventing EIF4E phosphorylation. Binds to the tripartite leader sequence of viral late mRNAs and recruits host eIF4G, PABPC1/poly-A binding protein and 40S ribosomes subunits on viral mRNAs, allowing ribosome shunting and efficient translation of late viral mRNAs even though conventional translation via ribosome scanning from the cap has been shut off in the host cell. During assembly, acts as a chaperone protein that helps hexon proteins assembly into trimers. This is Shutoff protein from Canis lupus familiaris (Dog).